Here is a 251-residue protein sequence, read N- to C-terminus: Metallo-beta-lactamase domain-containing protein 1 (251 aa).

Positions 118, 120, 122, 123, 173, 196, and 235 each coordinate Zn(2+).

This sequence belongs to the metallo-beta-lactamase superfamily. Glyoxalase II family. In terms of assembly, homodimer. Zn(2+) serves as cofactor.

The protein localises to the cytoplasm. It localises to the cytosol. The protein resides in the nucleus. It catalyses the reaction a ribonucleotidyl-ribonucleotide-RNA + H2O = a 3'-end ribonucleotide-RNA + a 5'-end 5'-phospho-ribonucleoside-RNA + H(+). Functionally, endoribonuclease that catalyzes the hydrolysis of histone-coding pre-mRNA 3'-end. Involved in histone pre-mRNA processing during the S-phase of the cell cycle, which is required for entering/progressing through S-phase. Cleaves histone pre-mRNA at a major and a minor cleavage site after the 5'-ACCCA-3' and the 5'-ACCCACA-3' sequence, respectively, and located downstream of the stem-loop. May require the presence of the HDE element located at the histone pre-RNA 3'-end to avoid non-specific cleavage. This Rattus norvegicus (Rat) protein is Metallo-beta-lactamase domain-containing protein 1 (Mblac1).